The sequence spans 187 residues: Nucleoside-triphosphatase THEP1 (187 aa).

ATP-binding positions include 9–16 and 100–107; these read GRPGVGKT and LIAIDEIG.

The protein belongs to the THEP1 NTPase family.

It carries out the reaction a ribonucleoside 5'-triphosphate + H2O = a ribonucleoside 5'-diphosphate + phosphate + H(+). Functionally, has nucleotide phosphatase activity towards ATP, GTP, CTP, TTP and UTP. May hydrolyze nucleoside diphosphates with lower efficiency. This is Nucleoside-triphosphatase THEP1 from Hyperthermus butylicus (strain DSM 5456 / JCM 9403 / PLM1-5).